A 502-amino-acid polypeptide reads, in one-letter code: Aspartyl/glutamyl-tRNA(Asn/Gln) amidotransferase subunit B (502 aa).

Positions 272–293 are disordered; sequence TRHWHEDTRSTTSGRPKSDADD.

Belongs to the GatB/GatE family. GatB subfamily. Heterotrimer of A, B and C subunits.

The catalysed reaction is L-glutamyl-tRNA(Gln) + L-glutamine + ATP + H2O = L-glutaminyl-tRNA(Gln) + L-glutamate + ADP + phosphate + H(+). The enzyme catalyses L-aspartyl-tRNA(Asn) + L-glutamine + ATP + H2O = L-asparaginyl-tRNA(Asn) + L-glutamate + ADP + phosphate + 2 H(+). In terms of biological role, allows the formation of correctly charged Asn-tRNA(Asn) or Gln-tRNA(Gln) through the transamidation of misacylated Asp-tRNA(Asn) or Glu-tRNA(Gln) in organisms which lack either or both of asparaginyl-tRNA or glutaminyl-tRNA synthetases. The reaction takes place in the presence of glutamine and ATP through an activated phospho-Asp-tRNA(Asn) or phospho-Glu-tRNA(Gln). This chain is Aspartyl/glutamyl-tRNA(Asn/Gln) amidotransferase subunit B, found in Paenarthrobacter aurescens (strain TC1).